A 446-amino-acid polypeptide reads, in one-letter code: Tubulin beta-6 chain (446 aa).

Residues 1–4 (MREI) carry the MREI motif motif. Q11, E69, S138, G142, T143, G144, N204, and N226 together coordinate GTP. E69 serves as a coordination point for Mg(2+). Residues 419–446 (VSEYQQYQDATADVEEYEEAEASPEKET) are disordered. The span at 430-440 (ADVEEYEEAEA) shows a compositional bias: acidic residues.

The protein belongs to the tubulin family. Dimer of alpha and beta chains. A typical microtubule is a hollow water-filled tube with an outer diameter of 25 nm and an inner diameter of 15 nM. Alpha-beta heterodimers associate head-to-tail to form protofilaments running lengthwise along the microtubule wall with the beta-tubulin subunit facing the microtubule plus end conferring a structural polarity. Microtubules usually have 13 protofilaments but different protofilament numbers can be found in some organisms and specialized cells. It depends on Mg(2+) as a cofactor. Some glutamate residues at the C-terminus are polyglycylated, resulting in polyglycine chains on the gamma-carboxyl group. Glycylation is mainly limited to tubulin incorporated into axonemes (cilia and flagella) whereas glutamylation is prevalent in neuronal cells, centrioles, axonemes, and the mitotic spindle. Both modifications can coexist on the same protein on adjacent residues, and lowering polyglycylation levels increases polyglutamylation, and reciprocally. The precise function of polyglycylation is still unclear. In terms of processing, some glutamate residues at the C-terminus are polyglutamylated, resulting in polyglutamate chains on the gamma-carboxyl group. Polyglutamylation plays a key role in microtubule severing by spastin (SPAST). SPAST preferentially recognizes and acts on microtubules decorated with short polyglutamate tails: severing activity by SPAST increases as the number of glutamates per tubulin rises from one to eight, but decreases beyond this glutamylation threshold. As to expression, highly expressed in bone marrow.

It localises to the cytoplasm. The protein localises to the cytoskeleton. Functionally, tubulin is the major constituent of microtubules, a cylinder consisting of laterally associated linear protofilaments composed of alpha- and beta-tubulin heterodimers. Microtubules grow by the addition of GTP-tubulin dimers to the microtubule end, where a stabilizing cap forms. Below the cap, tubulin dimers are in GDP-bound state, owing to GTPase activity of alpha-tubulin. In Gallus gallus (Chicken), this protein is Tubulin beta-6 chain.